A 131-amino-acid polypeptide reads, in one-letter code: MINDLISDSLTRIRNAGMRRLETTQLLHSKVIEALLGIFQAKGYIESFNVIEENKKKFINVVLKYDEKGKSVINEVKRVSKPGRRVYKGKDEIKRFKNGYGTIVVSTSKGVLANDEAYKAGVGGEVLCTIW.

It belongs to the universal ribosomal protein uS8 family. In terms of assembly, part of the 30S ribosomal subunit. Contacts proteins S5 and S12.

Its function is as follows. One of the primary rRNA binding proteins, it binds directly to 16S rRNA central domain where it helps coordinate assembly of the platform of the 30S subunit. This chain is Small ribosomal subunit protein uS8, found in Campylobacter lari (strain RM2100 / D67 / ATCC BAA-1060).